Here is a 144-residue protein sequence, read N- to C-terminus: Small ribosomal subunit protein eS12y (144 aa).

Ser-2 is subject to N-acetylserine.

This sequence belongs to the eukaryotic ribosomal protein eS12 family.

The polypeptide is Small ribosomal subunit protein eS12y (RPS12C) (Arabidopsis thaliana (Mouse-ear cress)).